Reading from the N-terminus, the 164-residue chain is MQKQHQRQHKVELVANLKSQFDSAKALLICDYKGLSVKKLEALRNKARIQGIKVQVIKNTLAHIAMKEVGCADLDLKETNVFLWGDDQIALSKLVFDFQKEHKDHFVLKAGLFDKESVSVAHVEAVSKLPSKEELMGMLLSVWTAPARYFVTGLDNLRKAKEEN.

Belongs to the universal ribosomal protein uL10 family. Part of the ribosomal stalk of the 50S ribosomal subunit. The N-terminus interacts with L11 and the large rRNA to form the base of the stalk. The C-terminus forms an elongated spine to which L12 dimers bind in a sequential fashion forming a multimeric L10(L12)X complex.

Functionally, forms part of the ribosomal stalk, playing a central role in the interaction of the ribosome with GTP-bound translation factors. The polypeptide is Large ribosomal subunit protein uL10 (rplJ) (Helicobacter pylori (strain J99 / ATCC 700824) (Campylobacter pylori J99)).